Here is a 157-residue protein sequence, read N- to C-terminus: SsrA-binding protein (157 aa).

The tract at residues 133–157 is disordered; it reads LHDKRESEKKRDWGREKGRLLRARG. Over residues 135–151 the composition is skewed to basic and acidic residues; the sequence is DKRESEKKRDWGREKGR.

The protein belongs to the SmpB family.

Its subcellular location is the cytoplasm. Functionally, required for rescue of stalled ribosomes mediated by trans-translation. Binds to transfer-messenger RNA (tmRNA), required for stable association of tmRNA with ribosomes. tmRNA and SmpB together mimic tRNA shape, replacing the anticodon stem-loop with SmpB. tmRNA is encoded by the ssrA gene; the 2 termini fold to resemble tRNA(Ala) and it encodes a 'tag peptide', a short internal open reading frame. During trans-translation Ala-aminoacylated tmRNA acts like a tRNA, entering the A-site of stalled ribosomes, displacing the stalled mRNA. The ribosome then switches to translate the ORF on the tmRNA; the nascent peptide is terminated with the 'tag peptide' encoded by the tmRNA and targeted for degradation. The ribosome is freed to recommence translation, which seems to be the essential function of trans-translation. This is SsrA-binding protein from Bradyrhizobium sp. (strain BTAi1 / ATCC BAA-1182).